A 258-amino-acid chain; its full sequence is Thiazole synthase 2 (258 aa).

Catalysis depends on K97, which acts as the Schiff-base intermediate with DXP. 1-deoxy-D-xylulose 5-phosphate contacts are provided by residues G158, 184-185, and 206-207; these read AG and NT.

It belongs to the ThiG family. Homotetramer. Forms heterodimers with either ThiH or ThiS.

The protein resides in the cytoplasm. The catalysed reaction is [ThiS sulfur-carrier protein]-C-terminal-Gly-aminoethanethioate + 2-iminoacetate + 1-deoxy-D-xylulose 5-phosphate = [ThiS sulfur-carrier protein]-C-terminal Gly-Gly + 2-[(2R,5Z)-2-carboxy-4-methylthiazol-5(2H)-ylidene]ethyl phosphate + 2 H2O + H(+). It functions in the pathway cofactor biosynthesis; thiamine diphosphate biosynthesis. In terms of biological role, catalyzes the rearrangement of 1-deoxy-D-xylulose 5-phosphate (DXP) to produce the thiazole phosphate moiety of thiamine. Sulfur is provided by the thiocarboxylate moiety of the carrier protein ThiS. In vitro, sulfur can be provided by H(2)S. The polypeptide is Thiazole synthase 2 (Syntrophotalea carbinolica (strain DSM 2380 / NBRC 103641 / GraBd1) (Pelobacter carbinolicus)).